Here is a 329-residue protein sequence, read N- to C-terminus: DNA repair protein RAD51 homolog 4 (329 aa).

Positions 1–83 (MGMLRAGLCP…ELKTSTAILS (83 aa)) are preferentially binds ssDNA. The tract at residues 4–77 (LRAGLCPGLT…GADLYEELKT (74 aa)) is interaction with XRCC2. Residues 77–328 (TSTAILSTGI…EQSPELPGKQ (252 aa)) are interaction with RAD51C. 107-114 (GGPGSGKT) contacts ATP.

It belongs to the RecA family. RAD51 subfamily. As to quaternary structure, part of the BCDX2 complex consisting of RAD51B, RAD51C, RAD51D and XRCC2; the complex has a ring-like structure arranged into a flat disc around a central channel. In the absence of DNA, the BCDX2 subcomplex XRCC2:RAD51D formed a multimeric ring structure; in the presence of single-stranded DNA it formed a filamentous structure with the ssDNA. Interacts with SWSAP1 and ZSWIM7; involved in homologous recombination repair. Interacts with BLM; required for stimulation of BLM activity by the BCDX2 subcomplex XRCC2:RAD51D. Highly expressed in brain followed by testis. Also expressed in heart, liver, kidney, spleen, lung and skeletal muscle.

The protein localises to the nucleus. It localises to the chromosome. The protein resides in the telomere. Involved in the homologous recombination repair (HRR) pathway of double-stranded DNA breaks arising during DNA replication or induced by DNA-damaging agents. Bind to single-stranded DNA (ssDNA) and has DNA-dependent ATPase activity. Part of the RAD51 paralog protein complex BCDX2 which acts in the BRCA1-BRCA2-dependent HR pathway. Upon DNA damage, BCDX2 acts downstream of BRCA2 recruitment and upstream of RAD51 recruitment. BCDX2 binds predominantly to the intersection of the four duplex arms of the Holliday junction and to junction of replication forks. The BCDX2 complex was originally reported to bind single-stranded DNA, single-stranded gaps in duplex DNA and specifically to nicks in duplex DNA. Involved in telomere maintenance. The BCDX2 subcomplex XRCC2:RAD51D can stimulate Holliday junction resolution by BLM. The protein is DNA repair protein RAD51 homolog 4 (Rad51d) of Mus musculus (Mouse).